The following is a 207-amino-acid chain: MFKFTEHNGVVAPLNISNIDTDAIIPKQFLQKVNKIGFGKYLFHDWRFIDKNQLKINPNFILNNYVYKNASILLTRENFGCGSSREHAVWSLLDYGFKVIISSSFSDIFFNNSFNNKLLLVVLEKKHIDYLFNLVDTKIGISFNVSLINKKITAGDLDIPFQIDDFQRLCLLNNWDNIDLTMKINHKIKSYEDNISSFLLERQEFTS.

The protein belongs to the LeuD family. LeuD type 1 subfamily. As to quaternary structure, heterodimer of LeuC and LeuD.

It carries out the reaction (2R,3S)-3-isopropylmalate = (2S)-2-isopropylmalate. It participates in amino-acid biosynthesis; L-leucine biosynthesis; L-leucine from 3-methyl-2-oxobutanoate: step 2/4. Catalyzes the isomerization between 2-isopropylmalate and 3-isopropylmalate, via the formation of 2-isopropylmaleate. This chain is 3-isopropylmalate dehydratase small subunit (leuD), found in Buchnera aphidicola subsp. Rhopalosiphum padi.